The following is a 268-amino-acid chain: Undecaprenyl-diphosphatase (268 aa).

Helical transmembrane passes span 1 to 21 (MSLIYLVVLALVQGITEFLPI), 39 to 59 (QGPLIDVMAHAGSLLAVLVYF), 85 to 105 (ALLVAASMPPIIIVAGALVAF), 110 to 130 (ALRSPRVIAIATLAFALPLWL), 144 to 164 (MSFKHAALIGIAQLFALIPGA), 187 to 207 (FSMLMAIPVIAAFGLVSLIEL), 221 to 241 (DGLIVAGLSFVTAWAAIAVLM), and 247 to 267 (IGFLPFALYRVGLGLALLVFF).

The protein belongs to the UppP family.

The protein localises to the cell inner membrane. The enzyme catalyses di-trans,octa-cis-undecaprenyl diphosphate + H2O = di-trans,octa-cis-undecaprenyl phosphate + phosphate + H(+). Functionally, catalyzes the dephosphorylation of undecaprenyl diphosphate (UPP). Confers resistance to bacitracin. The chain is Undecaprenyl-diphosphatase from Maricaulis maris (strain MCS10) (Caulobacter maris).